Reading from the N-terminus, the 251-residue chain is Triosephosphate isomerase (251 aa).

Substrate is bound at residue 9 to 11 (NWK). The Electrophile role is filled by His-95. Glu-167 serves as the catalytic Proton acceptor. Substrate is bound by residues Gly-173, Ser-213, and 234–235 (GG). Ser-213 is subject to Phosphoserine.

Belongs to the triosephosphate isomerase family. Homodimer.

It localises to the cytoplasm. It catalyses the reaction D-glyceraldehyde 3-phosphate = dihydroxyacetone phosphate. It functions in the pathway carbohydrate biosynthesis; gluconeogenesis. Its pathway is carbohydrate degradation; glycolysis; D-glyceraldehyde 3-phosphate from glycerone phosphate: step 1/1. Functionally, involved in the gluconeogenesis. Catalyzes stereospecifically the conversion of dihydroxyacetone phosphate (DHAP) to D-glyceraldehyde-3-phosphate (G3P). The protein is Triosephosphate isomerase of Anoxybacillus flavithermus (strain DSM 21510 / WK1).